The following is a 419-amino-acid chain: uncharacterized protein (419 aa).

This is an uncharacterized protein from Acinetobacter baylyi (strain ATCC 33305 / BD413 / ADP1).